The chain runs to 444 residues: Bifunctional enolase 2/transcriptional activator (444 aa).

Positions 163 and 172 each coordinate substrate. Residue glutamate 215 is the Proton donor of the active site. Mg(2+) contacts are provided by aspartate 250, glutamate 300, and aspartate 327. Positions 300 and 327 each coordinate substrate. Residue lysine 352 is the Proton acceptor of the active site. Residues serine 379–serine 382 and lysine 403 contribute to the substrate site.

Belongs to the enolase family. Homodimer. It depends on Mg(2+) as a cofactor.

It localises to the cytoplasm. The protein localises to the cytosol. Its subcellular location is the nucleus. The protein resides in the mitochondrion outer membrane. It carries out the reaction (2R)-2-phosphoglycerate = phosphoenolpyruvate + H2O. It participates in carbohydrate degradation; glycolysis; pyruvate from D-glyceraldehyde 3-phosphate: step 4/5. Functionally, multifunctional enzyme that acts as an enolase involved in the metabolism and as a positive regulator of cold-responsive gene transcription. Binds to the cis-element the gene promoter of STZ/ZAT10, a zinc finger transcriptional repressor. The protein is Bifunctional enolase 2/transcriptional activator (ENO2) of Arabidopsis thaliana (Mouse-ear cress).